A 167-amino-acid chain; its full sequence is MERFIERLMYSARWIMAPIYLGLSLALLALGIKFFQEVFHIFTVIISMKEVELILIILSLIDISLVGGLIVMVMYSGYENFVSRLDLDDHDDKLSWLGKLDAGSLKNKVAASIVAISSIHLLKVFMNTENIADDKIKWYLLIHITFVMSAFAMGYLDKLLRDKDSPH.

Transmembrane regions (helical) follow at residues 15–35, 53–73, 109–129, and 136–156; these read IMAP…IKFF, LILI…IVMV, VAAS…MNTE, and IKWY…MGYL.

This sequence belongs to the UPF0114 family.

Its subcellular location is the cell membrane. The protein is UPF0114 protein Tola_1474 of Tolumonas auensis (strain DSM 9187 / NBRC 110442 / TA 4).